Reading from the N-terminus, the 133-residue chain is Ribosome-binding factor A (133 aa).

This sequence belongs to the RbfA family. In terms of assembly, monomer. Binds 30S ribosomal subunits, but not 50S ribosomal subunits or 70S ribosomes.

It localises to the cytoplasm. In terms of biological role, one of several proteins that assist in the late maturation steps of the functional core of the 30S ribosomal subunit. Associates with free 30S ribosomal subunits (but not with 30S subunits that are part of 70S ribosomes or polysomes). Required for efficient processing of 16S rRNA. May interact with the 5'-terminal helix region of 16S rRNA. In Escherichia coli O127:H6 (strain E2348/69 / EPEC), this protein is Ribosome-binding factor A.